The sequence spans 157 residues: S-ribosylhomocysteine lyase (157 aa).

Residues His-54, His-58, and Cys-126 each coordinate Fe cation.

Belongs to the LuxS family. In terms of assembly, homodimer. Fe cation serves as cofactor.

It catalyses the reaction S-(5-deoxy-D-ribos-5-yl)-L-homocysteine = (S)-4,5-dihydroxypentane-2,3-dione + L-homocysteine. Functionally, involved in the synthesis of autoinducer 2 (AI-2) which is secreted by bacteria and is used to communicate both the cell density and the metabolic potential of the environment. The regulation of gene expression in response to changes in cell density is called quorum sensing. Catalyzes the transformation of S-ribosylhomocysteine (RHC) to homocysteine (HC) and 4,5-dihydroxy-2,3-pentadione (DPD). The chain is S-ribosylhomocysteine lyase from Bacillus pumilus (strain SAFR-032).